Here is a 539-residue protein sequence, read N- to C-terminus: Polyol transporter 5 (539 aa).

The segment covering 1–11 (MTGATPENRTA) has biased composition (polar residues). The segment at 1 to 24 (MTGATPENRTAPSPPPVKHVPESV) is disordered. A run of 12 helical transmembrane segments spans residues 37 to 57 (FACA…IGVM), 73 to 93 (LQIG…SCAA), 104 to 124 (YTIV…GLSP), 127 to 147 (AFLM…LMIA), 165 to 185 (SFPE…NLAF), 196 to 216 (LMLG…LAMP), 296 to 316 (IAAI…VVLF), 333 to 353 (LLAT…ATFL), 364 to 384 (LTSV…LTII), 391 to 411 (VMWA…TFSI), 433 to 453 (GSSM…ISFL), and 463 to 483 (GAFY…YTFL). 2 stretches are compositionally biased toward basic and acidic residues: residues 503-514 (WRDSKSKPKGNP) and 530-539 (QWKEGDTQSS). Residues 503–539 (WRDSKSKPKGNPEKTVPNPEVEIGSNKQWKEGDTQSS) form a disordered region.

It belongs to the major facilitator superfamily. Sugar transporter (TC 2.A.1.1) family. Highly expressed in roots. Expressed in vascular tissue of leaves, sepals and siliques.

Its subcellular location is the cell membrane. Plasma membrane broad-spectrum sugar-proton symporter. Mediates the uptake of linear polyols such as sorbitol, xylitol, erythritol or glycerol. Can transport the cyclic polyol myo-inositol and different hexoses, pentoses (including ribose), tetroses and sugar alcohols. In Arabidopsis thaliana (Mouse-ear cress), this protein is Polyol transporter 5 (PLT5).